Reading from the N-terminus, the 322-residue chain is 3-hydroxyacyl-CoA dehydrogenase FVEG_12628 (322 aa).

A helical transmembrane segment spans residues 5 to 25 (IRTVAIVGCGVIGMGWAVLFL). The active-site For hydroxyacyl-coenzyme A dehydrogenase activity is the glutamate 151.

The protein belongs to the 3-hydroxyacyl-CoA dehydrogenase family.

The protein localises to the membrane. Its function is as follows. 3-hydroxyacyl-CoA dehydrogenase; part of the Fusarium detoxification of benzoxazolinone cluster 2 (FDB2) involved in the degradation of benzoxazolinones produced by the host plant. Maize, wheat, and rye produce the 2 benzoxazinone phytoanticipins 2,4-dihy-droxy-7-methoxy-1,4-benzoxazin-3-one (DIMBOA) and 2,4-dihydroxy-1,4-benzoxazin-3-one (DIBOA) that, due to their inherent instability once released, spontaneously degrade to the more stable corresponding benzoxazolinones, 6-methoxy-2-benzoxazolinone (MBOA) and 2-benzoxazolinone (BOA), respectively. The first step in the detoxification of benzoxazolinones involves the hydrolysis of the cyclic ester bond of benzoxazolinones by the FDB1 cluster gamma-lactamase MBL1 to aminophenols. MBL1 is able to convert BOA into 2-aminophenol (2-AP), as well as MBOA into 5-methoxy-2-aminophenol (2-AMP). The FDB2 cluster N-malonyltransferase FDB2/NAT1 then metabolizes aminophenols via N-malonylation to non-toxic malonamic acids. FDB2/NAT1 converts 2-AP into N-(2-hydroxyphenyl) malonamic acid (HPMA) and 2-AMP into N-(2-hydroxy-4-methoxyphenyl) malonamic acid (HMPMA). The duplicated dienlactone hydrolases DLH1 and DLH2 may provide redundant function for hydrolyzing the lactone moiety in the BOA molecule. The roles of the amidases an other enzymes encoded by the 2 FDB clusters have not been identified so far. The protein is 3-hydroxyacyl-CoA dehydrogenase FVEG_12628 of Gibberella moniliformis (strain M3125 / FGSC 7600) (Maize ear and stalk rot fungus).